The sequence spans 239 residues: MEGTAESQTPDLRDVEGKVGRKIPEGLLRGLRGECELGTSGDVLLPGAPSTGHGLGDKIMALRMELAYLRAIDVKILQQLVTLNEGIEAVRWLLEERGTLTSHCSSLTSSQYSLTGGSPGRSRRGSWDSLPDTSSTDRLDSVSIGSFLDTVTPRELDEQGLPGPSCPEIDWAKVIPTEDRARTEVDMTSTKLGSLTATWKLPGDGLQCGPPEPSEDGNANQGFEAHWYWGQCQDDVTFL.

LRR repeat units lie at residues 55–83 (LGDK…LVTL) and 93–114 (LLEE…QYSL). Over residues 105–116 (SSLTSSQYSLTG) the composition is skewed to low complexity. The disordered stretch occupies residues 105 to 138 (SSLTSSQYSLTGGSPGRSRRGSWDSLPDTSSTDR). 3 positions are modified to phosphoserine: S118, S126, and S129.

As to quaternary structure, forms a tripartite complex with CDC42BPA/CDC42BPB and MYO18A acting as an adapter connecting both. Its binding to CDC42BPA/CDC42BPB results in their activation by abolition of their negative autoregulation. Interacts with CDC42BPA and CDC42BPB. Phosphorylated.

Its subcellular location is the cytoplasm. Functionally, acts as an activator of the canonical NF-kappa-B pathway and drive the production of pro-inflammatory cytokines. Promotes the antigen (Ag)-presenting and priming function of dendritic cells via the canonical NF-kappa-B pathway. In concert with MYO18A and CDC42BPA/CDC42BPB, is involved in modulating lamellar actomyosin retrograde flow that is crucial to cell protrusion and migration. Activates CDC42BPA/CDC42BPB and targets it to actomyosin through its interaction with MYO18A, leading to MYL9/MLC2 phosphorylation and MYH9/MYH10-dependent actomyosin assembly in the lamella. The protein is Leucine rich adaptor protein 1 (Lurap1) of Mus musculus (Mouse).